Reading from the N-terminus, the 228-residue chain is Interleukin-27 subunit beta (228 aa).

The signal sequence occupies residues M1 to G18. 2 consecutive Fibronectin type-III domains span residues A26–R124 and K127–A224. N-linked (GlcNAc...) asparagine glycosylation is found at N54 and N104.

Belongs to the type I cytokine receptor family. Type 3 subfamily. As to quaternary structure, heterodimer with IL27/IL27A; not disulfide-linked. This heterodimer is known as interleukin IL-27. Heterodimer with IL12A; not disulfide-linked. This heterodimer is known as interleukin IL-35. Interacts with SQSTM1.

Its subcellular location is the secreted. Associates with IL27 to form the IL-27 interleukin, a heterodimeric cytokine which functions in innate immunity. IL-27 has pro- and anti-inflammatory properties, that can regulate T-helper cell development, suppress T-cell proliferation, stimulate cytotoxic T-cell activity, induce isotype switching in B-cells, and that has diverse effects on innate immune cells. Among its target cells are CD4 T-helper cells which can differentiate in type 1 effector cells (TH1), type 2 effector cells (TH2) and IL17 producing helper T-cells (TH17). It drives rapid clonal expansion of naive but not memory CD4 T-cells. It also strongly synergizes with IL-12 to trigger interferon-gamma/IFN-gamma production of naive CD4 T-cells, binds to the cytokine receptor WSX-1/TCCR. Another important role of IL-27 is its antitumor activity as well as its antiangiogenic activity with activation of production of antiangiogenic chemokines. The sequence is that of Interleukin-27 subunit beta (Ebi3) from Mus musculus (Mouse).